A 96-amino-acid polypeptide reads, in one-letter code: Transcription and mRNA export factor SUS1 (96 aa).

Lys-68 is covalently cross-linked (Glycyl lysine isopeptide (Lys-Gly) (interchain with G-Cter in ubiquitin)).

Belongs to the ENY2 family. Component of the nuclear pore complex (NPC)-associated TREX-2 complex (transcription and export complex 2), composed of at least SUS1, SAC3, THP1, SEM1, and CDC31. TREX-2 contains 2 SUS1 chains. The TREX-2 complex interacts with the nucleoporin NUP1. Component of the 1.8 MDa SAGA transcription coactivator-HAT complex. SAGA is built of 5 distinct domains with specialized functions. Within the SAGA complex, SUS1, SGF11, SGF73 and UBP8 form an additional subcomplex of SAGA called the DUB module (deubiquitination module). Interacts directly with THP1, SAC3, SGF11, and with the RNA polymerase II.

The protein resides in the nucleus. The protein localises to the nucleoplasm. It is found in the cytoplasm. Its subcellular location is the P-body. Functionally, involved in mRNA export coupled transcription activation by association with both the TREX-2 and the SAGA complexes. At the promoters, SAGA is required for recruitment of the basal transcription machinery. It influences RNA polymerase II transcriptional activity through different activities such as TBP interaction and promoter selectivity, interaction with transcription activators, and chromatin modification through histone acetylation and deubiquitination. Within the SAGA complex, participates in a subcomplex required for deubiquitination of H2B and for the maintenance of steady-state H3 methylation levels. The TREX-2 complex functions in docking export-competent ribonucleoprotein particles (mRNPs) to the nuclear entrance of the nuclear pore complex (nuclear basket). TREX-2 participates in mRNA export and accurate chromatin positioning in the nucleus by tethering genes to the nuclear periphery. May also be involved in cytoplasmic mRNA decay by interaction with components of P-bodies. The sequence is that of Transcription and mRNA export factor SUS1 from Saccharomyces cerevisiae (strain RM11-1a) (Baker's yeast).